Here is a 118-residue protein sequence, read N- to C-terminus: Elicitin (118 aa).

The first 20 residues, 1 to 20 (MNFRALFAATVAALVGSTSA), serve as a signal peptide directing secretion. Intrachain disulfides connect Cys23-Cys91, Cys47-Cys76, and Cys71-Cys115.

It belongs to the elicitin family.

Its subcellular location is the secreted. Induces local and distal defense responses (incompatible hypersensitive reaction) in plants from the solanaceae and cruciferae families. Elicits leaf necrosis and causes the accumulation of pathogenesis-related proteins. Might interact with the lipidic molecules of the plasma membrane. The polypeptide is Elicitin (PARA1) (Phytophthora nicotianae (Potato buckeye rot agent)).